The chain runs to 372 residues: uncharacterized protein (372 aa).

In terms of domain architecture, PNPLA spans 38–270 (FFIEGGGTKG…ANNIPLDYLI (233 aa)). The GXGXXG signature appears at 42 to 47 (GGGTKG). Residues 74 to 78 (GTSVG) carry the GXSXG motif. Ser76 serves as the catalytic Nucleophile. The active-site Proton acceptor is the Asp257. The DGA/G signature appears at 257–259 (DGG).

Functionally, probable lipid hydrolase. This is an uncharacterized protein from Acanthamoeba polyphaga (Amoeba).